A 25-amino-acid polypeptide reads, in one-letter code: Neuromedin-U-25 (25 aa).

Asparagine amide is present on N25.

It belongs to the NmU family.

Its subcellular location is the secreted. In terms of biological role, stimulates uterine smooth muscle contraction and causes selective vasoconstriction. The polypeptide is Neuromedin-U-25 (NMU) (Sus scrofa (Pig)).